Here is a 286-residue protein sequence, read N- to C-terminus: Energy-coupling factor transporter ATP-binding protein EcfA2 (286 aa).

The region spanning 3 to 246 is the ABC transporter domain; the sequence is IQFNQVSYIY…KTQLLKWHIE (244 aa). 40–47 contacts ATP; that stretch reads GQTGSGKS.

The protein belongs to the ABC transporter superfamily. Energy-coupling factor EcfA family. As to quaternary structure, forms a stable energy-coupling factor (ECF) transporter complex composed of 2 membrane-embedded substrate-binding proteins (S component), 2 ATP-binding proteins (A component) and 2 transmembrane proteins (T component).

Its subcellular location is the cell membrane. In terms of biological role, ATP-binding (A) component of a common energy-coupling factor (ECF) ABC-transporter complex. Unlike classic ABC transporters this ECF transporter provides the energy necessary to transport a number of different substrates. The sequence is that of Energy-coupling factor transporter ATP-binding protein EcfA2 from Staphylococcus epidermidis (strain ATCC 12228 / FDA PCI 1200).